Here is a 98-residue protein sequence, read N- to C-terminus: Small ribosomal subunit protein uS17 (98 aa).

This sequence belongs to the universal ribosomal protein uS17 family. Part of the 30S ribosomal subunit.

One of the primary rRNA binding proteins, it binds specifically to the 5'-end of 16S ribosomal RNA. The chain is Small ribosomal subunit protein uS17 from Carboxydothermus hydrogenoformans (strain ATCC BAA-161 / DSM 6008 / Z-2901).